A 95-amino-acid chain; its full sequence is Aspartyl/glutamyl-tRNA(Asn/Gln) amidotransferase subunit C (95 aa).

This sequence belongs to the GatC family. Heterotrimer of A, B and C subunits.

It catalyses the reaction L-glutamyl-tRNA(Gln) + L-glutamine + ATP + H2O = L-glutaminyl-tRNA(Gln) + L-glutamate + ADP + phosphate + H(+). It carries out the reaction L-aspartyl-tRNA(Asn) + L-glutamine + ATP + H2O = L-asparaginyl-tRNA(Asn) + L-glutamate + ADP + phosphate + 2 H(+). In terms of biological role, allows the formation of correctly charged Asn-tRNA(Asn) or Gln-tRNA(Gln) through the transamidation of misacylated Asp-tRNA(Asn) or Glu-tRNA(Gln) in organisms which lack either or both of asparaginyl-tRNA or glutaminyl-tRNA synthetases. The reaction takes place in the presence of glutamine and ATP through an activated phospho-Asp-tRNA(Asn) or phospho-Glu-tRNA(Gln). The polypeptide is Aspartyl/glutamyl-tRNA(Asn/Gln) amidotransferase subunit C (Campylobacter fetus subsp. fetus (strain 82-40)).